We begin with the raw amino-acid sequence, 260 residues long: Alpha carbonic anhydrase 6 (260 aa).

A signal peptide spans 1 to 28 (MDANTKTILFFVVFFIDLFSPNILFVYA). In terms of domain architecture, Alpha-carbonic anhydrase spans 35–260 (PLFTYKQKTE…FVFVFWCMLM (226 aa)). Cysteines 60 and 215 form a disulfide. The active-site Proton acceptor is the His-100. Zn(2+) is bound by residues His-126 and His-128. The N-linked (GlcNAc...) asparagine glycan is linked to Asn-136. Position 145 (His-145) interacts with Zn(2+). 211 to 212 (TI) contributes to the substrate binding site.

It belongs to the alpha-class carbonic anhydrase family. The cofactor is Zn(2+). In terms of processing, N-glycosylated.

The protein resides in the plastid. It is found in the chloroplast stroma. It carries out the reaction hydrogencarbonate + H(+) = CO2 + H2O. Its function is as follows. Reversible hydration of carbon dioxide. This chain is Alpha carbonic anhydrase 6 (ACA6), found in Arabidopsis thaliana (Mouse-ear cress).